A 238-amino-acid chain; its full sequence is Ribosomal RNA small subunit methyltransferase G (238 aa).

Residues G77, F82, 128–129 (AE), and R147 contribute to the S-adenosyl-L-methionine site.

It belongs to the methyltransferase superfamily. RNA methyltransferase RsmG family.

It localises to the cytoplasm. Specifically methylates the N7 position of guanine in position 535 of 16S rRNA. This Brevibacillus brevis (strain 47 / JCM 6285 / NBRC 100599) protein is Ribosomal RNA small subunit methyltransferase G.